The primary structure comprises 132 residues: MTKTVLLYIATAVAAILGCYLPYCYVKRDGSLLLIPAALSLIAFVGLLVLYPAASGRVYAAYGGVYILTAFLWLRFIDGIKLSPPGLSGRGGGIVRGRDHDRRLAPRRGLRGAESGVDLAGFACGCPTRRSH.

3 helical membrane-spanning segments follow: residues 5–25 (VLLY…PYCY), 32–52 (LLLI…VLYP), and 60–80 (AAYG…IDGI).

The protein belongs to the UPF0060 family.

It localises to the cell inner membrane. This chain is UPF0060 membrane protein SG1469, found in Sodalis glossinidius (strain morsitans).